The following is a 264-amino-acid chain: Phosphate import ATP-binding protein PstB 1 (264 aa).

Positions 20-259 (LETRDLNIFY…PKIKLTEDYI (240 aa)) constitute an ABC transporter domain. 52–59 (GASGSGKS) contributes to the ATP binding site.

The protein belongs to the ABC transporter superfamily. Phosphate importer (TC 3.A.1.7) family. As to quaternary structure, the complex is composed of two ATP-binding proteins (PstB), two transmembrane proteins (PstC and PstA) and a solute-binding protein (PstS).

The protein resides in the cell membrane. The catalysed reaction is phosphate(out) + ATP + H2O = ADP + 2 phosphate(in) + H(+). In terms of biological role, part of the ABC transporter complex PstSACB involved in phosphate import. Responsible for energy coupling to the transport system. The sequence is that of Phosphate import ATP-binding protein PstB 1 from Ligilactobacillus salivarius (strain UCC118) (Lactobacillus salivarius).